We begin with the raw amino-acid sequence, 292 residues long: Elongation factor Ts (292 aa).

The involved in Mg(2+) ion dislocation from EF-Tu stretch occupies residues 80-83; that stretch reads TDFV.

This sequence belongs to the EF-Ts family.

It localises to the cytoplasm. Its function is as follows. Associates with the EF-Tu.GDP complex and induces the exchange of GDP to GTP. It remains bound to the aminoacyl-tRNA.EF-Tu.GTP complex up to the GTP hydrolysis stage on the ribosome. In Cupriavidus taiwanensis (strain DSM 17343 / BCRC 17206 / CCUG 44338 / CIP 107171 / LMG 19424 / R1) (Ralstonia taiwanensis (strain LMG 19424)), this protein is Elongation factor Ts.